Consider the following 654-residue polypeptide: Fructose-1,6-bisphosphatase class 3 (654 aa).

A disordered region spans residues Asn288 to Glu307. Residues Asp298 to Glu307 are compositionally biased toward basic and acidic residues.

The protein belongs to the FBPase class 3 family. The cofactor is Mn(2+).

The enzyme catalyses beta-D-fructose 1,6-bisphosphate + H2O = beta-D-fructose 6-phosphate + phosphate. Its pathway is carbohydrate biosynthesis; gluconeogenesis. The polypeptide is Fructose-1,6-bisphosphatase class 3 (Staphylococcus aureus (strain MSSA476)).